Consider the following 243-residue polypeptide: Vesicle-associated membrane protein-associated protein B/C (243 aa).

Ala-2 is subject to N-acetylalanine. Over 2-222 (AKVEQVLSLE…PTGKEEGLST (221 aa)) the chain is Cytoplasmic. In terms of domain architecture, MSP spans 7–124 (VLSLEPQHEL…MDSKLRCVFE (118 aa)). Residue Ser-146 is modified to Phosphoserine. Lys-147 participates in a covalent cross-link: Glycyl lysine isopeptide (Lys-Gly) (interchain with G-Cter in SUMO1). Phosphothreonine is present on Thr-150. 5 positions are modified to phosphoserine: Ser-156, Ser-158, Ser-159, Ser-160, and Ser-206. Residues 159–196 (SSLDDTEVKKVMEECKRLQGEVQRLREENKQFKEEDGL) adopt a coiled-coil conformation. A helical; Anchor for type IV membrane protein membrane pass occupies residues 223 to 243 (RLLALVVLFFIVGVIIGKIAL).

Belongs to the VAMP-associated protein (VAP) (TC 9.B.17) family. As to quaternary structure, homodimer, and heterodimer with VAPA. Interacts with VAMP1 and VAMP2. Interacts (via MSP domain) with ZFYVE27. Interacts with RMDN3. Interacts with KIF5A in a ZFYVE27-dependent manner. Interacts (via MSP domain) with STARD3 (via phospho-FFAT motif). Interacts with STARD3NL (via FFAT motif). Interacts with CERT1. Interacts with PLEKHA3 and SACM1L to form a ternary complex. Interacts with VPS13A (via FFAT motif). Interacts with RB1CC1 (via phosphorylated FFAT motif), MIGA2 (via phosphorylated FFAT motif), RMDN3 (via phosphorylated FFAT motif), OSBPL1A (via FFAT motif), KCNB1 (via phosphorylated FFAT motif) and KCNB2 (via phosphorylated FFAT motif). Interacts (via MSP domain) with WDR44 (via FFAT motif); the interactions connect the endoplasmic reticulum (ER) with the endosomal tubule. (Microbial infection) Interacts (via MSP domain) with hepatitis C virus (HCV) non-structural protein 5A (via disordered domain D3). Interacts with HCV RNA-directed RNA polymerase. As to expression, ubiquitous. Isoform 1 predominates.

The protein resides in the endoplasmic reticulum membrane. Its function is as follows. Endoplasmic reticulum (ER)-anchored protein that mediates the formation of contact sites between the ER and endosomes via interaction with FFAT motif-containing proteins such as STARD3 or WDR44. Interacts with STARD3 in a FFAT motif phosphorylation dependent manner. Via interaction with WDR44 participates in neosynthesized protein export. Participates in the endoplasmic reticulum unfolded protein response (UPR) by inducing ERN1/IRE1 activity. Involved in cellular calcium homeostasis regulation. This Homo sapiens (Human) protein is Vesicle-associated membrane protein-associated protein B/C.